The following is a 118-amino-acid chain: NADPH-dependent 7-cyano-7-deazaguanine reductase (118 aa).

Cysteine 31 (thioimide intermediate) is an active-site residue. The Proton donor role is filled by aspartate 38. Substrate-binding positions include 53-55 and 72-73; these read IEL and YE.

The protein belongs to the GTP cyclohydrolase I family. QueF type 1 subfamily.

Its subcellular location is the cytoplasm. The enzyme catalyses 7-aminomethyl-7-carbaguanine + 2 NADP(+) = 7-cyano-7-deazaguanine + 2 NADPH + 3 H(+). It participates in tRNA modification; tRNA-queuosine biosynthesis. In terms of biological role, catalyzes the NADPH-dependent reduction of 7-cyano-7-deazaguanine (preQ0) to 7-aminomethyl-7-deazaguanine (preQ1). This is NADPH-dependent 7-cyano-7-deazaguanine reductase from Prosthecochloris aestuarii (strain DSM 271 / SK 413).